A 149-amino-acid polypeptide reads, in one-letter code: Putative pre-16S rRNA nuclease (149 aa).

This sequence belongs to the YqgF nuclease family.

The protein resides in the cytoplasm. Functionally, could be a nuclease involved in processing of the 5'-end of pre-16S rRNA. The protein is Putative pre-16S rRNA nuclease of Burkholderia multivorans (strain ATCC 17616 / 249).